A 165-amino-acid chain; its full sequence is Type II secretion system protein M (165 aa).

Residues 1–22 (MKELLAPVQAWWRSVTPREQKM) are Cytoplasmic-facing. Residues 23–43 (VMGMGALTVLAIAYWGIWQPL) traverse the membrane as a helical segment. Over 44–165 (SERTAQAQAR…VKRLQLKRGG (122 aa)) the chain is Periplasmic.

The protein belongs to the GSP M family. As to quaternary structure, type II secretion system is composed of four main components: the outer membrane complex, the inner membrane complex, the cytoplasmic secretion ATPase and the periplasm-spanning pseudopilus. Forms homodimers. Interacts with EpsL/GspL. Interacts with EpsE/GspE. Interacts with EpsF/GspF.

It localises to the cell inner membrane. Functionally, inner membrane component of the type II secretion system required for the energy-dependent secretion of extracellular factors such as proteases and toxins from the periplasm. Plays a role in the complex assembly and recruits EpsL resulting in a stable complex in the inner membrane. Provides thus a link between the energy-providing EpsE protein in the cytoplasm and the rest of the T2SS machinery. This Vibrio cholerae serotype O1 (strain ATCC 39315 / El Tor Inaba N16961) protein is Type II secretion system protein M (epsM).